We begin with the raw amino-acid sequence, 75 residues long: ATP synthase subunit c (75 aa).

Transmembrane regions (helical) follow at residues 8–28 and 54–74; these read FIAI…VANI and AGMV…LMFV.

The protein belongs to the ATPase C chain family. In terms of assembly, F-type ATPases have 2 components, F(1) - the catalytic core - and F(0) - the membrane proton channel. F(1) has five subunits: alpha(3), beta(3), gamma(1), delta(1), epsilon(1). F(0) has three main subunits: a(1), b(2) and c(10-14). The alpha and beta chains form an alternating ring which encloses part of the gamma chain. F(1) is attached to F(0) by a central stalk formed by the gamma and epsilon chains, while a peripheral stalk is formed by the delta and b chains.

The protein resides in the cell membrane. F(1)F(0) ATP synthase produces ATP from ADP in the presence of a proton or sodium gradient. F-type ATPases consist of two structural domains, F(1) containing the extramembraneous catalytic core and F(0) containing the membrane proton channel, linked together by a central stalk and a peripheral stalk. During catalysis, ATP synthesis in the catalytic domain of F(1) is coupled via a rotary mechanism of the central stalk subunits to proton translocation. In terms of biological role, key component of the F(0) channel; it plays a direct role in translocation across the membrane. A homomeric c-ring of between 10-14 subunits forms the central stalk rotor element with the F(1) delta and epsilon subunits. The sequence is that of ATP synthase subunit c from Wolbachia sp. subsp. Brugia malayi (strain TRS).